The chain runs to 114 residues: Large ribosomal subunit protein eL31 (114 aa).

Belongs to the eukaryotic ribosomal protein eL31 family.

This Eremothecium gossypii (strain ATCC 10895 / CBS 109.51 / FGSC 9923 / NRRL Y-1056) (Yeast) protein is Large ribosomal subunit protein eL31 (RPL31).